Reading from the N-terminus, the 176-residue chain is I-Kappa-B like protein G1 (176 aa).

ANK repeat units lie at residues 56–88 (EGRQCTHIAAEYDVSNAVMKIELLVMLGADINS), 93–123 (FGNTLLHIAAGTENYQLAEWLCKKPGVELGA), and 127–156 (LYKTAYHIAYERQNARMMEILRVNGAVCDD).

This sequence belongs to the polydnaviridae I-Kappa-B-like protein family.

In terms of biological role, suppresses the host immune response through NF-kappa-B inactivation. Possesses ankyrin repeat domains required for NF-kappa-B binding but lacks the regulatory regions required for dissociation from NF-kappa-B and degradation. Therefore, prevents host NF-kappa-B release and subsequent activation. The protein is I-Kappa-B like protein G1 (G3) of Microplitis demolitor (Parasitoid wasp).